Reading from the N-terminus, the 278-residue chain is Sulfur carrier protein FdhD (278 aa).

Catalysis depends on C121, which acts as the Cysteine persulfide intermediate. Position 260–265 (260–265 (FCKPGR)) interacts with Mo-bis(molybdopterin guanine dinucleotide).

The protein belongs to the FdhD family.

The protein resides in the cytoplasm. Its function is as follows. Required for formate dehydrogenase (FDH) activity. Acts as a sulfur carrier protein that transfers sulfur from IscS to the molybdenum cofactor prior to its insertion into FDH. In Klebsiella pneumoniae subsp. pneumoniae (strain ATCC 700721 / MGH 78578), this protein is Sulfur carrier protein FdhD.